Consider the following 150-residue polypeptide: Large ribosomal subunit protein eL19 (150 aa).

A disordered region spans residues 56 to 90 (RGISSGRLKERKHKRRSKGEGRKHGSRKGKSGART).

It belongs to the eukaryotic ribosomal protein eL19 family. As to quaternary structure, part of the 50S ribosomal subunit.

Binds to the 23S rRNA. The protein is Large ribosomal subunit protein eL19 of Sulfolobus acidocaldarius (strain ATCC 33909 / DSM 639 / JCM 8929 / NBRC 15157 / NCIMB 11770).